The sequence spans 251 residues: 5-oxoprolinase subunit A (251 aa).

The protein belongs to the LamB/PxpA family. As to quaternary structure, forms a complex composed of PxpA, PxpB and PxpC.

It carries out the reaction 5-oxo-L-proline + ATP + 2 H2O = L-glutamate + ADP + phosphate + H(+). Catalyzes the cleavage of 5-oxoproline to form L-glutamate coupled to the hydrolysis of ATP to ADP and inorganic phosphate. The protein is 5-oxoprolinase subunit A of Vibrio parahaemolyticus serotype O3:K6 (strain RIMD 2210633).